A 464-amino-acid chain; its full sequence is Trigger factor (464 aa).

The PPIase FKBP-type domain maps to 162 to 243 (GDFVSIDLSA…VKSVKERELP (82 aa)). The disordered stretch occupies residues 431-464 (IDTSEFFGKRPSGDGAADEDADQADESTTADAGE). Positions 446 to 455 (AADEDADQAD) are enriched in acidic residues.

This sequence belongs to the FKBP-type PPIase family. Tig subfamily.

The protein resides in the cytoplasm. The enzyme catalyses [protein]-peptidylproline (omega=180) = [protein]-peptidylproline (omega=0). In terms of biological role, involved in protein export. Acts as a chaperone by maintaining the newly synthesized protein in an open conformation. Functions as a peptidyl-prolyl cis-trans isomerase. This is Trigger factor from Mycobacterium avium (strain 104).